A 418-amino-acid polypeptide reads, in one-letter code: Gamma-glutamyl phosphate reductase (418 aa).

Belongs to the gamma-glutamyl phosphate reductase family.

The protein localises to the cytoplasm. The catalysed reaction is L-glutamate 5-semialdehyde + phosphate + NADP(+) = L-glutamyl 5-phosphate + NADPH + H(+). It participates in amino-acid biosynthesis; L-proline biosynthesis; L-glutamate 5-semialdehyde from L-glutamate: step 2/2. Its function is as follows. Catalyzes the NADPH-dependent reduction of L-glutamate 5-phosphate into L-glutamate 5-semialdehyde and phosphate. The product spontaneously undergoes cyclization to form 1-pyrroline-5-carboxylate. This is Gamma-glutamyl phosphate reductase from Trichlorobacter lovleyi (strain ATCC BAA-1151 / DSM 17278 / SZ) (Geobacter lovleyi).